The sequence spans 348 residues: Phosphoribosylformylglycinamidine cyclo-ligase (348 aa).

It belongs to the AIR synthase family.

The protein resides in the cytoplasm. It carries out the reaction 2-formamido-N(1)-(5-O-phospho-beta-D-ribosyl)acetamidine + ATP = 5-amino-1-(5-phospho-beta-D-ribosyl)imidazole + ADP + phosphate + H(+). It functions in the pathway purine metabolism; IMP biosynthesis via de novo pathway; 5-amino-1-(5-phospho-D-ribosyl)imidazole from N(2)-formyl-N(1)-(5-phospho-D-ribosyl)glycinamide: step 2/2. The polypeptide is Phosphoribosylformylglycinamidine cyclo-ligase (Cereibacter sphaeroides (strain ATCC 17023 / DSM 158 / JCM 6121 / CCUG 31486 / LMG 2827 / NBRC 12203 / NCIMB 8253 / ATH 2.4.1.) (Rhodobacter sphaeroides)).